A 372-amino-acid chain; its full sequence is Steroid C26-monooxygenase (372 aa).

Cys-314 contacts heme.

This sequence belongs to the cytochrome P450 family. Heme serves as cofactor.

The catalysed reaction is cholest-4-en-3-one + 6 reduced [2Fe-2S]-[ferredoxin] + 3 O2 + 5 H(+) = (25R)-3-oxocholest-4-en-26-oate + 6 oxidized [2Fe-2S]-[ferredoxin] + 4 H2O. It functions in the pathway steroid metabolism; cholesterol degradation. In terms of biological role, involved in the utilization of cholesterol as the sole carbon and energy source by degrading the side chain during infection. Primarily catalyzes the sequential oxidation of the terminal methyl of cholest-4-en-3-one into (25R)-26-hydroxycholest-4-en-3-one (alcohol), (25R)-26-oxocholest-4-en-3-one (aldehyde), to finally yield the carboxylic acid (25R)-3-oxocholest-4-en-26-oate. Also able to sequentially oxidize cholesterol itself, not only cholest-4-en-3-one. This is Steroid C26-monooxygenase (cyp142) from Mycobacterium tuberculosis (strain CDC 1551 / Oshkosh).